Consider the following 391-residue polypeptide: Sulfate adenylyltransferase (391 aa).

The protein belongs to the sulfate adenylyltransferase family.

It catalyses the reaction sulfate + ATP + H(+) = adenosine 5'-phosphosulfate + diphosphate. Its pathway is sulfur metabolism; hydrogen sulfide biosynthesis; sulfite from sulfate: step 1/3. The polypeptide is Sulfate adenylyltransferase (Lactiplantibacillus plantarum (strain ATCC BAA-793 / NCIMB 8826 / WCFS1) (Lactobacillus plantarum)).